The following is a 1370-amino-acid chain: DNA-directed RNA polymerase subunit beta (1370 aa).

The protein belongs to the RNA polymerase beta chain family. As to quaternary structure, the RNAP catalytic core consists of 2 alpha, 1 beta, 1 beta' and 1 omega subunit. When a sigma factor is associated with the core the holoenzyme is formed, which can initiate transcription.

It catalyses the reaction RNA(n) + a ribonucleoside 5'-triphosphate = RNA(n+1) + diphosphate. In terms of biological role, DNA-dependent RNA polymerase catalyzes the transcription of DNA into RNA using the four ribonucleoside triphosphates as substrates. This chain is DNA-directed RNA polymerase subunit beta, found in Albidiferax ferrireducens (strain ATCC BAA-621 / DSM 15236 / T118) (Rhodoferax ferrireducens).